Here is a 173-residue protein sequence, read N- to C-terminus: Beta-defensin 129 (173 aa).

The N-terminal stretch at 1–19 is a signal peptide; it reads MKLLFPIFASLMLQYKVNT. 3 disulfide bridges follow: Cys27/Cys53, Cys34/Cys48, and Cys38/Cys54. A disordered region spans residues 144–173; it reads STKSNIKESRDSATASPPPAPPPPNTLPTP. Pro residues predominate over residues 159–173; that stretch reads SPPPAPPPPNTLPTP.

Belongs to the beta-defensin family.

Its subcellular location is the secreted. In terms of biological role, has antibacterial activity. This chain is Beta-defensin 129 (DEFB129), found in Hylobates lar (Lar gibbon).